Here is a 338-residue protein sequence, read N- to C-terminus: Ketol-acid reductoisomerase (NADP(+)) (338 aa).

The region spanning 1–181 (MNIYYDKDCD…GGGRAGIIET (181 aa)) is the KARI N-terminal Rossmann domain. Residues 24–27 (YGSQ), Arg47, Ser50, Ser52, and 82–85 (DEHQ) each bind NADP(+). Residue His107 is part of the active site. Gly133 serves as a coordination point for NADP(+). Positions 182 to 327 (AFREETETDL…ERLRSMMPWI (146 aa)) constitute a KARI C-terminal knotted domain. Mg(2+) is bound by residues Asp190, Glu194, Glu226, and Glu230. A substrate-binding site is contributed by Ser251.

Belongs to the ketol-acid reductoisomerase family. Mg(2+) serves as cofactor.

It catalyses the reaction (2R)-2,3-dihydroxy-3-methylbutanoate + NADP(+) = (2S)-2-acetolactate + NADPH + H(+). It carries out the reaction (2R,3R)-2,3-dihydroxy-3-methylpentanoate + NADP(+) = (S)-2-ethyl-2-hydroxy-3-oxobutanoate + NADPH + H(+). Its pathway is amino-acid biosynthesis; L-isoleucine biosynthesis; L-isoleucine from 2-oxobutanoate: step 2/4. It participates in amino-acid biosynthesis; L-valine biosynthesis; L-valine from pyruvate: step 2/4. Involved in the biosynthesis of branched-chain amino acids (BCAA). Catalyzes an alkyl-migration followed by a ketol-acid reduction of (S)-2-acetolactate (S2AL) to yield (R)-2,3-dihydroxy-isovalerate. In the isomerase reaction, S2AL is rearranged via a Mg-dependent methyl migration to produce 3-hydroxy-3-methyl-2-ketobutyrate (HMKB). In the reductase reaction, this 2-ketoacid undergoes a metal-dependent reduction by NADPH to yield (R)-2,3-dihydroxy-isovalerate. The chain is Ketol-acid reductoisomerase (NADP(+)) from Nitrosococcus oceani (strain ATCC 19707 / BCRC 17464 / JCM 30415 / NCIMB 11848 / C-107).